The chain runs to 451 residues: Adenylyltransferase and sulfurtransferase MOCS3-2 (451 aa).

Residues Gly-42 to Leu-62 form a disordered region. The segment covering Glu-43–Ser-52 has biased composition (acidic residues). Thr-60 carries the post-translational modification Phosphothreonine. Residues Gly-99, Asp-120, Ser-127–Arg-131, Lys-144, and Asp-188–Asn-189 each bind ATP. Positions 229 and 232 each coordinate Zn(2+). Cys-246 serves as the catalytic Glycyl thioester intermediate; for adenylyltransferase activity. The Zn(2+) site is built by Cys-304 and Cys-307. The 97-residue stretch at Gln-353 to Pro-449 folds into the Rhodanese domain. Cys-408 functions as the Cysteine persulfide intermediate; for sulfurtransferase activity in the catalytic mechanism.

It in the N-terminal section; belongs to the HesA/MoeB/ThiF family. UBA4 subfamily. The cofactor is Zn(2+).

It localises to the cytoplasm. It catalyses the reaction [molybdopterin-synthase sulfur-carrier protein]-C-terminal Gly-Gly + ATP + H(+) = [molybdopterin-synthase sulfur-carrier protein]-C-terminal Gly-Gly-AMP + diphosphate. The enzyme catalyses [molybdopterin-synthase sulfur-carrier protein]-C-terminal Gly-Gly-AMP + S-sulfanyl-L-cysteinyl-[cysteine desulfurase] + AH2 = [molybdopterin-synthase sulfur-carrier protein]-C-terminal-Gly-aminoethanethioate + L-cysteinyl-[cysteine desulfurase] + A + AMP + 2 H(+). It functions in the pathway tRNA modification; 5-methoxycarbonylmethyl-2-thiouridine-tRNA biosynthesis. It participates in cofactor biosynthesis; molybdopterin biosynthesis. Plays a central role in 2-thiolation of mcm(5)S(2)U at tRNA wobble positions of cytosolic tRNA(Lys), tRNA(Glu) and tRNA(Gln). Also essential during biosynthesis of the molybdenum cofactor. Acts by mediating the C-terminal thiocarboxylation of sulfur carriers URM1 and MOCS2A. Its N-terminus first activates URM1 and MOCS2A as acyl-adenylates (-COAMP), then the persulfide sulfur on the catalytic cysteine is transferred to URM1 and MOCS2A to form thiocarboxylation (-COSH) of their C-terminus. The reaction probably involves hydrogen sulfide that is generated from the persulfide intermediate and that acts as a nucleophile towards URM1 and MOCS2A. Subsequently, a transient disulfide bond is formed. Does not use thiosulfate as sulfur donor; NFS1 probably acting as a sulfur donor for thiocarboxylation reactions. The protein is Adenylyltransferase and sulfurtransferase MOCS3-2 of Drosophila pseudoobscura pseudoobscura (Fruit fly).